The following is a 453-amino-acid chain: Ribosomal protein uS12 methylthiotransferase RimO (453 aa).

In terms of domain architecture, MTTase N-terminal spans 9–124 (PKIGFVSLGC…VMDAVHKHMP (116 aa)). Residues Cys18, Cys54, Cys83, Cys155, Cys159, and Cys162 each contribute to the [4Fe-4S] cluster site. Residues 141 to 382 (LTPKHFAYLK…MLLQEEISKK (242 aa)) form the Radical SAM core domain. One can recognise a TRAM domain in the interval 385–453 (QAKVGKTMRV…ADAHDLWAEA (69 aa)).

It belongs to the methylthiotransferase family. RimO subfamily. [4Fe-4S] cluster is required as a cofactor.

Its subcellular location is the cytoplasm. The enzyme catalyses L-aspartate(89)-[ribosomal protein uS12]-hydrogen + (sulfur carrier)-SH + AH2 + 2 S-adenosyl-L-methionine = 3-methylsulfanyl-L-aspartate(89)-[ribosomal protein uS12]-hydrogen + (sulfur carrier)-H + 5'-deoxyadenosine + L-methionine + A + S-adenosyl-L-homocysteine + 2 H(+). Catalyzes the methylthiolation of an aspartic acid residue of ribosomal protein uS12. The chain is Ribosomal protein uS12 methylthiotransferase RimO from Janthinobacterium sp. (strain Marseille) (Minibacterium massiliensis).